The primary structure comprises 194 residues: 7-methyl-GTP pyrophosphatase (194 aa).

The active-site Proton acceptor is the D69.

It belongs to the Maf family. YceF subfamily. The cofactor is a divalent metal cation.

Its subcellular location is the cytoplasm. The catalysed reaction is N(7)-methyl-GTP + H2O = N(7)-methyl-GMP + diphosphate + H(+). Its function is as follows. Nucleoside triphosphate pyrophosphatase that hydrolyzes 7-methyl-GTP (m(7)GTP). May have a dual role in cell division arrest and in preventing the incorporation of modified nucleotides into cellular nucleic acids. The sequence is that of 7-methyl-GTP pyrophosphatase from Sodalis glossinidius (strain morsitans).